The chain runs to 172 residues: Nicotinamide-nucleotide adenylyltransferase (172 aa).

This sequence belongs to the archaeal NMN adenylyltransferase family.

It is found in the cytoplasm. It carries out the reaction beta-nicotinamide D-ribonucleotide + ATP + H(+) = diphosphate + NAD(+). It functions in the pathway cofactor biosynthesis; NAD(+) biosynthesis; NAD(+) from nicotinamide D-ribonucleotide: step 1/1. This Methanococcus vannielii (strain ATCC 35089 / DSM 1224 / JCM 13029 / OCM 148 / SB) protein is Nicotinamide-nucleotide adenylyltransferase.